Consider the following 407-residue polypeptide: Multifunctional CCA protein (407 aa).

The ATP site is built by Gly-8 and Arg-11. CTP contacts are provided by Gly-8 and Arg-11. 2 residues coordinate Mg(2+): Asp-21 and Asp-23. Positions 91, 137, and 140 each coordinate ATP. Residues Arg-91, Arg-137, and Arg-140 each contribute to the CTP site. An HD domain is found at Thr-228–Trp-329.

The protein belongs to the tRNA nucleotidyltransferase/poly(A) polymerase family. Bacterial CCA-adding enzyme type 1 subfamily. As to quaternary structure, monomer. Can also form homodimers and oligomers. The cofactor is Mg(2+). Requires Ni(2+) as cofactor.

It carries out the reaction a tRNA precursor + 2 CTP + ATP = a tRNA with a 3' CCA end + 3 diphosphate. The enzyme catalyses a tRNA with a 3' CCA end + 2 CTP + ATP = a tRNA with a 3' CCACCA end + 3 diphosphate. In terms of biological role, catalyzes the addition and repair of the essential 3'-terminal CCA sequence in tRNAs without using a nucleic acid template. Adds these three nucleotides in the order of C, C, and A to the tRNA nucleotide-73, using CTP and ATP as substrates and producing inorganic pyrophosphate. tRNA 3'-terminal CCA addition is required both for tRNA processing and repair. Also involved in tRNA surveillance by mediating tandem CCA addition to generate a CCACCA at the 3' terminus of unstable tRNAs. While stable tRNAs receive only 3'-terminal CCA, unstable tRNAs are marked with CCACCA and rapidly degraded. The chain is Multifunctional CCA protein from Erwinia tasmaniensis (strain DSM 17950 / CFBP 7177 / CIP 109463 / NCPPB 4357 / Et1/99).